A 247-amino-acid polypeptide reads, in one-letter code: Small ribosomal subunit protein uS3 (247 aa).

Residues 51–119 form the KH type-2 domain; the sequence is VAKRDKRPAG…ELHLNIVEIR (69 aa). The segment covering 224-233 has biased composition (basic and acidic residues); that stretch reads PSAHDRRQQE. Positions 224-247 are disordered; it reads PSAHDRRQQELQESGGASRPRRDR.

It belongs to the universal ribosomal protein uS3 family. In terms of assembly, part of the 30S ribosomal subunit. Forms a tight complex with proteins S10 and S14.

In terms of biological role, binds the lower part of the 30S subunit head. Binds mRNA in the 70S ribosome, positioning it for translation. The protein is Small ribosomal subunit protein uS3 of Jannaschia sp. (strain CCS1).